The chain runs to 716 residues: Probable calcium-binding mitochondrial carrier K02F3.2 (716 aa).

Residues 1–345 (MSFDHLLTSS…CLKDIQAIDP (345 aa)) form an N-terminal domain region. EF-hand domains are found at residues 93 to 121 (YNKE…FCAF), 127 to 162 (SPDA…TQPL), 165 to 195 (QDFD…CQLL), and 198 to 233 (FYEE…VKGH). 9 residues coordinate Ca(2+): D106, T108, D110, E117, D140, N142, S144, T146, and E151. Positions 211, 213, 215, 217, and 222 each coordinate Ca(2+). A linker loop domain region spans residues 346 to 362 (ERLKRVSQMDRLINIKA). A carrier domain region spans residues 372-664 (GTAFLESAYR…RLFYVDFAGS (293 aa)). Solcar repeat units follow at residues 376-468 (LESA…MRDK), 475-560 (IPLY…AKLA), and 568-656 (NSPG…LQRL). Transmembrane regions (helical) follow at residues 382 to 399 (FLLG…VYPI), 443 to 462 (GLLP…LTMN), 485 to 498 (GTGG…TNPL), 535 to 554 (GSRA…FPAY), 574 to 591 (FASA…VTPA), and 631 to 650 (GTAA…LLTY). A C-terminal domain region spans residues 665 to 716 (RPTGSELATTKTIQDESSTNPDHVGGYKLAAATFSGIEHKFGLFLPKFETSK).

This sequence belongs to the mitochondrial carrier (TC 2.A.29) family. In terms of assembly, homodimer (via N-terminus).

It is found in the mitochondrion inner membrane. Functionally, mitochondrial and calcium-binding carrier that catalyzes the calcium-dependent exchange of cytoplasmic glutamate with mitochondrial aspartate across the mitochondrial inner membrane. The sequence is that of Probable calcium-binding mitochondrial carrier K02F3.2 from Caenorhabditis elegans.